A 632-amino-acid chain; its full sequence is tRNA uridine 5-carboxymethylaminomethyl modification enzyme MnmG (632 aa).

FAD is bound by residues 15–20 (GAGHAG), isoleucine 127, and serine 182. 276–290 (GPRYCPSIEDKIVRF) provides a ligand contact to NAD(+). Glutamine 373 is an FAD binding site.

It belongs to the MnmG family. Homodimer. Heterotetramer of two MnmE and two MnmG subunits. FAD serves as cofactor.

The protein resides in the cytoplasm. Its function is as follows. NAD-binding protein involved in the addition of a carboxymethylaminomethyl (cmnm) group at the wobble position (U34) of certain tRNAs, forming tRNA-cmnm(5)s(2)U34. This chain is tRNA uridine 5-carboxymethylaminomethyl modification enzyme MnmG, found in Streptococcus pyogenes serotype M2 (strain MGAS10270).